A 169-amino-acid polypeptide reads, in one-letter code: 3-hydroxyacyl-[acyl-carrier-protein] dehydratase FabZ (169 aa).

Histidine 74 is an active-site residue.

Belongs to the thioester dehydratase family. FabZ subfamily.

The protein resides in the cytoplasm. The catalysed reaction is a (3R)-hydroxyacyl-[ACP] = a (2E)-enoyl-[ACP] + H2O. Functionally, involved in unsaturated fatty acids biosynthesis. Catalyzes the dehydration of short chain beta-hydroxyacyl-ACPs and long chain saturated and unsaturated beta-hydroxyacyl-ACPs. The polypeptide is 3-hydroxyacyl-[acyl-carrier-protein] dehydratase FabZ (Gluconobacter oxydans (strain 621H) (Gluconobacter suboxydans)).